We begin with the raw amino-acid sequence, 492 residues long: 3-octaprenyl-4-hydroxybenzoate carboxy-lyase (492 aa).

Residue N177 participates in Mn(2+) binding. Residues 180–182, 194–196, and 199–200 each bind prenylated FMN; these read IYR, RWL, and RG. E243 lines the Mn(2+) pocket. The active-site Proton donor is the D292.

The protein belongs to the UbiD family. In terms of assembly, homohexamer. Requires prenylated FMN as cofactor. It depends on Mn(2+) as a cofactor.

The protein localises to the cell membrane. The enzyme catalyses a 4-hydroxy-3-(all-trans-polyprenyl)benzoate + H(+) = a 2-(all-trans-polyprenyl)phenol + CO2. The protein operates within cofactor biosynthesis; ubiquinone biosynthesis. Its function is as follows. Catalyzes the decarboxylation of 3-octaprenyl-4-hydroxy benzoate to 2-octaprenylphenol, an intermediate step in ubiquinone biosynthesis. This Neisseria meningitidis serogroup A / serotype 4A (strain DSM 15465 / Z2491) protein is 3-octaprenyl-4-hydroxybenzoate carboxy-lyase.